Here is a 637-residue protein sequence, read N- to C-terminus: Poly [ADP-ribose] polymerase 2 (637 aa).

The DNA-binding element occupies 1–140 (MANKLKVDEL…KKEEKIVTAT (140 aa)). The 35-residue stretch at 2 to 36 (ANKLKVDELRLKLAERGLSTTGVKAVLVERLEEAI) folds into the SAP 1 domain. A compositionally biased stretch (basic and acidic residues) spans 35-46 (AIAEDTKKEESK). The disordered stretch occupies residues 35–56 (AIAEDTKKEESKSKRKRNSSND). The Nuclear localization signal signature appears at 41-62 (KKEESKSKRKRNSSNDTYESNK). The region spanning 69-103 (FRGMIVKELREEAIKRGLDTTGTKKDLLERLCNDA) is the SAP 2 domain. Polar residues predominate over residues 106–117 (VSNAPVKSSNGT). The disordered stretch occupies residues 106–134 (VSNAPVKSSNGTDEAEDDNNGFEEEKKEE). Residues 118–127 (DEAEDDNNGF) show a composition bias toward acidic residues. In terms of domain architecture, WGR spans 158–255 (QYHVLQRGDD…KEFIPHPKSY (98 aa)). The region spanning 286–404 (QSKLDTRVAK…EIELATKLLS (119 aa)) is the PARP alpha-helical domain. In terms of domain architecture, PARP catalytic spans 412 to 637 (DPLYYHYQQL…VIQVKFNYKH (226 aa)).

This sequence belongs to the ARTD/PARP family.

The protein localises to the nucleus. It carries out the reaction NAD(+) + (ADP-D-ribosyl)n-acceptor = nicotinamide + (ADP-D-ribosyl)n+1-acceptor + H(+).. The catalysed reaction is L-aspartyl-[protein] + NAD(+) = 4-O-(ADP-D-ribosyl)-L-aspartyl-[protein] + nicotinamide. The enzyme catalyses L-glutamyl-[protein] + NAD(+) = 5-O-(ADP-D-ribosyl)-L-glutamyl-[protein] + nicotinamide. Involved in the base excision repair (BER) pathway, by catalyzing the poly(ADP-ribosyl)ation of a limited number of acceptor proteins involved in chromatin architecture and in DNA metabolism. This modification follows DNA damages and appears as an obligatory step in a detection/signaling pathway leading to the reparation of DNA strand breaks. This chain is Poly [ADP-ribose] polymerase 2 (PARP2), found in Arabidopsis thaliana (Mouse-ear cress).